Here is a 451-residue protein sequence, read N- to C-terminus: Interferon regulatory factor 4 (451 aa).

The segment at residues 21–129 (NGKLRQWLID…DPYKVYRIVP (109 aa)) is a DNA-binding region (IRF tryptophan pentad repeat). A phosphoserine; by ROCK2 mark is found at serine 447 and serine 448.

This sequence belongs to the IRF family. As to quaternary structure, interacts with the BATF-JUNB heterodimer. Interacts with BATF (via bZIP domain); the interaction is direct. Interacts with SPIB. Interacts with DEF6. Directly interacts with NLRP3 in the nucleus of Th2 cells; this interaction enhances IRF4 ability to bind to the IL4 promoter and is required for optimal IRF4-dependent IL4 transcription. Interacts with SPI1. Phosphorylation by ROCK2 regulates IL-17 and IL-21 production. Lymphoid cells.

It is found in the nucleus. The protein localises to the cytoplasm. Its function is as follows. Transcriptional activator. Binds to the interferon-stimulated response element (ISRE) of the MHC class I promoter. Binds the immunoglobulin lambda light chain enhancer, together with PU.1. Probably plays a role in ISRE-targeted signal transduction mechanisms specific to lymphoid cells. Involved in CD8(+) dendritic cell differentiation by forming a complex with the BATF-JUNB heterodimer in immune cells, leading to recognition of AICE sequence (5'-TGAnTCA/GAAA-3'), an immune-specific regulatory element, followed by cooperative binding of BATF and IRF4 and activation of genes. The polypeptide is Interferon regulatory factor 4 (Homo sapiens (Human)).